We begin with the raw amino-acid sequence, 396 residues long: 1-deoxy-D-xylulose 5-phosphate reductoisomerase (396 aa).

Positions 13, 14, 15, 16, and 127 each coordinate NADPH. Lys-128 contacts 1-deoxy-D-xylulose 5-phosphate. Residue Glu-129 coordinates NADPH. Asp-153 contacts Mn(2+). Ser-154, Glu-155, Ser-184, and His-207 together coordinate 1-deoxy-D-xylulose 5-phosphate. Glu-155 is a binding site for Mn(2+). NADPH is bound at residue Gly-213. 4 residues coordinate 1-deoxy-D-xylulose 5-phosphate: Ser-220, Asn-225, Lys-226, and Glu-229. Residue Glu-229 participates in Mn(2+) binding.

It belongs to the DXR family. Mg(2+) serves as cofactor. It depends on Mn(2+) as a cofactor.

The enzyme catalyses 2-C-methyl-D-erythritol 4-phosphate + NADP(+) = 1-deoxy-D-xylulose 5-phosphate + NADPH + H(+). Its pathway is isoprenoid biosynthesis; isopentenyl diphosphate biosynthesis via DXP pathway; isopentenyl diphosphate from 1-deoxy-D-xylulose 5-phosphate: step 1/6. In terms of biological role, catalyzes the NADPH-dependent rearrangement and reduction of 1-deoxy-D-xylulose-5-phosphate (DXP) to 2-C-methyl-D-erythritol 4-phosphate (MEP). This chain is 1-deoxy-D-xylulose 5-phosphate reductoisomerase, found in Pseudomonas fluorescens (strain ATCC BAA-477 / NRRL B-23932 / Pf-5).